Consider the following 308-residue polypeptide: Aspartate carbamoyltransferase catalytic subunit (308 aa).

Carbamoyl phosphate-binding residues include R58 and T59. L-aspartate is bound at residue K86. The carbamoyl phosphate site is built by R108, H136, and Q139. Residues R169 and R222 each contribute to the L-aspartate site. Carbamoyl phosphate-binding residues include G264 and P265.

The protein belongs to the aspartate/ornithine carbamoyltransferase superfamily. ATCase family. In terms of assembly, heterododecamer (2C3:3R2) of six catalytic PyrB chains organized as two trimers (C3), and six regulatory PyrI chains organized as three dimers (R2).

The catalysed reaction is carbamoyl phosphate + L-aspartate = N-carbamoyl-L-aspartate + phosphate + H(+). The protein operates within pyrimidine metabolism; UMP biosynthesis via de novo pathway; (S)-dihydroorotate from bicarbonate: step 2/3. Functionally, catalyzes the condensation of carbamoyl phosphate and aspartate to form carbamoyl aspartate and inorganic phosphate, the committed step in the de novo pyrimidine nucleotide biosynthesis pathway. This chain is Aspartate carbamoyltransferase catalytic subunit, found in Campylobacter hominis (strain ATCC BAA-381 / DSM 21671 / CCUG 45161 / LMG 19568 / NCTC 13146 / CH001A).